Reading from the N-terminus, the 314-residue chain is Olfactory receptor 9Q2 (314 aa).

Topologically, residues 1–25 are extracellular; the sequence is MAERNYTVVTEFFLTAFTEHLQWRV. N5 carries an N-linked (GlcNAc...) asparagine glycan. The chain crosses the membrane as a helical span at residues 26–46; sequence PLFLIFLSFYLATMLGNTGMI. The Cytoplasmic segment spans residues 47-54; it reads LLIRGDRR. A helical membrane pass occupies residues 55-75; the sequence is LHTPMYFFLSHLSLVDICYSS. At 76–99 the chain is on the extracellular side; it reads AIIPQMLAVLWEHGTTISQARCAA. Residues C97 and C189 are joined by a disulfide bond. The helical transmembrane segment at 100-120 threads the bilayer; that stretch reads QFFLFTFFASIDCYLLAIMAY. Residues 121–139 lie on the Cytoplasmic side of the membrane; that stretch reads DRYTAVCQPLLYVTIITEK. The chain crosses the membrane as a helical span at residues 140-160; the sequence is ARWGLVTGAYVAGFFSAFVRT. Residues 161-197 lie on the Extracellular side of the membrane; that stretch reads VTAFTLSFCGNNEINFIFCDLPPLLKLSCGDSYTQEV. A helical membrane pass occupies residues 198-217; sequence VIIVFALFVMPACILVILVS. Over 218–237 the chain is Cytoplasmic; sequence YLFIIVAILQIHSAGGRAKT. A helical membrane pass occupies residues 238–258; that stretch reads FSTCASHLTAVALFFGTLIFM. Residues 259-271 are Extracellular-facing; the sequence is YLRDNTGQSSEGD. The helical transmembrane segment at 272–292 threads the bilayer; that stretch reads RVVSVLYTVVTPMLNPLIYSL. At 293–314 the chain is on the cytoplasmic side; that stretch reads RNKEVKEATRKALSKSKPARRP.

It belongs to the G-protein coupled receptor 1 family.

Its subcellular location is the cell membrane. In terms of biological role, odorant receptor. This Homo sapiens (Human) protein is Olfactory receptor 9Q2 (OR9Q2).